A 137-amino-acid polypeptide reads, in one-letter code: Transcription antitermination protein NusB (137 aa).

Belongs to the NusB family.

Functionally, involved in transcription antitermination. Required for transcription of ribosomal RNA (rRNA) genes. Binds specifically to the boxA antiterminator sequence of the ribosomal RNA (rrn) operons. The polypeptide is Transcription antitermination protein NusB (Clavibacter michiganensis subsp. michiganensis (strain NCPPB 382)).